The primary structure comprises 309 residues: MRENNQSSTLEFILLGVTGQQEQEDFFYILFLFIYPITLIGNLLIVLAICSDVHLHNPMYFLLANLSLVDIFFSSVTIPKMLANHLSGSKSISFGGCLTQMYFMIDLGNTDSYTLAAMAYDRAVAISRPLHYTTIMSPRSCIWLIAGSWVIGNANALPHTLLTASLSFCGNQEVANFYCDITPLLKLSCSDIHFHVKMMYLGVGIFSVPLLCIIVSYIRVFSTVFQVPSTKGVLKAFSTCGSHLTVVSLYYGTVMGMYFRPLTNYSLKDAVITVMCTAVTPMLNPFIYSLRNRDMKAALQKLFNKRISS.

At 1–25 the chain is on the extracellular side; sequence MRENNQSSTLEFILLGVTGQQEQED. N5 carries an N-linked (GlcNAc...) asparagine glycan. The chain crosses the membrane as a helical span at residues 26–49; it reads FFYILFLFIYPITLIGNLLIVLAI. At 50–57 the chain is on the cytoplasmic side; the sequence is CSDVHLHN. Residues 58 to 79 traverse the membrane as a helical segment; sequence PMYFLLANLSLVDIFFSSVTIP. Residues 80-100 lie on the Extracellular side of the membrane; that stretch reads KMLANHLSGSKSISFGGCLTQ. C97 and C189 are disulfide-bonded. A helical transmembrane segment spans residues 101–120; sequence MYFMIDLGNTDSYTLAAMAY. The Cytoplasmic segment spans residues 121–139; that stretch reads DRAVAISRPLHYTTIMSPR. Residues 140–158 form a helical membrane-spanning segment; that stretch reads SCIWLIAGSWVIGNANALP. Residues 159 to 195 are Extracellular-facing; sequence HTLLTASLSFCGNQEVANFYCDITPLLKLSCSDIHFH. Residues 196 to 218 traverse the membrane as a helical segment; sequence VKMMYLGVGIFSVPLLCIIVSYI. The Cytoplasmic portion of the chain corresponds to 219 to 235; the sequence is RVFSTVFQVPSTKGVLK. A helical membrane pass occupies residues 236–258; sequence AFSTCGSHLTVVSLYYGTVMGMY. Residues 259–270 lie on the Extracellular side of the membrane; that stretch reads FRPLTNYSLKDA. N264 carries N-linked (GlcNAc...) asparagine glycosylation. The helical transmembrane segment at 271-290 threads the bilayer; that stretch reads VITVMCTAVTPMLNPFIYSL. The Cytoplasmic segment spans residues 291–309; it reads RNRDMKAALQKLFNKRISS.

Belongs to the G-protein coupled receptor 1 family.

The protein localises to the cell membrane. In terms of biological role, odorant receptor. This is Olfactory receptor 1A1 (OR1A1) from Gorilla gorilla gorilla (Western lowland gorilla).